The following is a 130-amino-acid chain: Peptidyl-prolyl cis-trans isomerase pin4 (130 aa).

Residues 1-38 (MGKDKKASGSGSGSKGGKDAGNKDAGKDAGKASKGAQS) are disordered. The span at 16-31 (GGKDAGNKDAGKDAGK) shows a compositional bias: basic and acidic residues. The PpiC domain occupies 36-128 (AQSINVRHIL…FGYHIIMVEG (93 aa)).

Belongs to the PpiC/parvulin rotamase family. PIN4 subfamily.

It catalyses the reaction [protein]-peptidylproline (omega=180) = [protein]-peptidylproline (omega=0). PPIases accelerate the folding of proteins. It catalyzes the cis-trans isomerization of proline imidic peptide bonds in oligopeptides. The sequence is that of Peptidyl-prolyl cis-trans isomerase pin4 (ppi-5) from Neurospora crassa (strain ATCC 24698 / 74-OR23-1A / CBS 708.71 / DSM 1257 / FGSC 987).